We begin with the raw amino-acid sequence, 285 residues long: MGRAPCCEKMGLKRGPWTPEEDQILVSFILNHGHSNWRALPKQAGLLRCGKSCRLRWMNYLKPDIKRGNFTKEEEDAIISLHQILGNRWSAIAAKLPGRTDNEIKNVWHTHLKKRLEDYQPAKPKTSNKKKGTKPKSESVITSSNSTRSESELADSSNPSGESLFSTSPSTSEVSSMTLISHDGYSNEINMDNKPGDISTIDQECVSFETFGADIDESFWKETLYSQDEHNYVSNDLEVAGLVEIQQEFQNLGSANNEMIFDSEMDFWFDVLARTGGEQDLLAGL.

HTH myb-type domains lie at 9–61 (KMGL…MNYL) and 62–116 (KPDI…KKRL). DNA-binding regions (H-T-H motif) lie at residues 37 to 61 (WRALPKQAGLLRCGKSCRLRWMNYL) and 89 to 112 (WSAIAAKLPGRTDNEIKNVWHTHL). The tract at residues 115–172 (RLEDYQPAKPKTSNKKKGTKPKSESVITSSNSTRSESELADSSNPSGESLFSTSPSTS) is disordered. Polar residues predominate over residues 139 to 158 (SVITSSNSTRSESELADSSN). The span at 159 to 172 (PSGESLFSTSPSTS) shows a compositional bias: low complexity.

Interacts with SCRM/ICE1. In terms of tissue distribution, expressed in roots, leaves, stems and flowers. Expressed in stomatal guard cells.

Its subcellular location is the nucleus. Its function is as follows. Transcription factor involved in cold-regulation of CBF genes and in the development of freezing tolerance. May be part of a complex network of transcription factors controlling the expression of CBF genes and other genes in response to cold stress. Binds to the MYB recognition sequences in the promoters of CBF1, CBF2 and CBF3 genes. Involved in drought and salt tolerance. May enhance expression levels of genes involved in abscisic acid (ABA) biosynthesis and signaling, as well as those encoding stress-protective proteins. This Arabidopsis thaliana (Mouse-ear cress) protein is Transcription factor MYB15.